A 254-amino-acid chain; its full sequence is Nickel import ATP-binding protein NikD (254 aa).

An ABC transporter domain is found at 2–241 (PQQIELRNIA…PKHTVTRSLV (240 aa)). 36-43 (GGSGSGKS) contacts ATP.

It belongs to the ABC transporter superfamily. Nickel importer (TC 3.A.1.5.3) family. The complex is composed of two ATP-binding proteins (NikD and NikE), two transmembrane proteins (NikB and NikC) and a solute-binding protein (NikA).

It is found in the cell inner membrane. The catalysed reaction is Ni(2+)(out) + ATP + H2O = Ni(2+)(in) + ADP + phosphate + H(+). In terms of biological role, part of the ABC transporter complex NikABCDE involved in nickel import. Responsible for energy coupling to the transport system. This is Nickel import ATP-binding protein NikD from Shigella boydii serotype 4 (strain Sb227).